Consider the following 663-residue polypeptide: DNA ligase (663 aa).

NAD(+)-binding positions include 33–37 (DYSYD), 82–83 (SI), and Glu112. The active-site N6-AMP-lysine intermediate is Lys114. Residues Arg135, Glu171, Lys285, and Lys309 each coordinate NAD(+). Positions 403, 406, 419, and 424 each coordinate Zn(2+). The BRCT domain maps to 581–663 (DKEAPLQGKV…LRILDAKSVS (83 aa)).

It belongs to the NAD-dependent DNA ligase family. LigA subfamily. Mg(2+) is required as a cofactor. It depends on Mn(2+) as a cofactor.

It carries out the reaction NAD(+) + (deoxyribonucleotide)n-3'-hydroxyl + 5'-phospho-(deoxyribonucleotide)m = (deoxyribonucleotide)n+m + AMP + beta-nicotinamide D-nucleotide.. Its function is as follows. DNA ligase that catalyzes the formation of phosphodiester linkages between 5'-phosphoryl and 3'-hydroxyl groups in double-stranded DNA using NAD as a coenzyme and as the energy source for the reaction. It is essential for DNA replication and repair of damaged DNA. The sequence is that of DNA ligase from Chlamydia trachomatis serovar D (strain ATCC VR-885 / DSM 19411 / UW-3/Cx).